The primary structure comprises 458 residues: Argininosuccinate lyase (458 aa).

The protein belongs to the lyase 1 family. Argininosuccinate lyase subfamily.

It is found in the cytoplasm. It carries out the reaction 2-(N(omega)-L-arginino)succinate = fumarate + L-arginine. The protein operates within amino-acid biosynthesis; L-arginine biosynthesis; L-arginine from L-ornithine and carbamoyl phosphate: step 3/3. In Pseudoalteromonas atlantica (strain T6c / ATCC BAA-1087), this protein is Argininosuccinate lyase.